Consider the following 341-residue polypeptide: Ketol-acid reductoisomerase (NADP(+)) (341 aa).

In terms of domain architecture, KARI N-terminal Rossmann spans 2–181; the sequence is VKVYYNGDAN…GSARAGVIET (180 aa). NADP(+) contacts are provided by residues 25–28, arginine 48, serine 52, and 82–85; these read YGSQ and DEHQ. Histidine 107 is a catalytic residue. Glycine 133 contributes to the NADP(+) binding site. Positions 182 to 327 constitute a KARI C-terminal knotted domain; sequence TFKEETETDL…RELRKMMPFV (146 aa). Residues aspartate 190, glutamate 194, glutamate 226, and glutamate 230 each coordinate Mg(2+). Serine 251 serves as a coordination point for substrate.

Belongs to the ketol-acid reductoisomerase family. Mg(2+) is required as a cofactor.

The catalysed reaction is (2R)-2,3-dihydroxy-3-methylbutanoate + NADP(+) = (2S)-2-acetolactate + NADPH + H(+). It catalyses the reaction (2R,3R)-2,3-dihydroxy-3-methylpentanoate + NADP(+) = (S)-2-ethyl-2-hydroxy-3-oxobutanoate + NADPH + H(+). Its pathway is amino-acid biosynthesis; L-isoleucine biosynthesis; L-isoleucine from 2-oxobutanoate: step 2/4. It functions in the pathway amino-acid biosynthesis; L-valine biosynthesis; L-valine from pyruvate: step 2/4. In terms of biological role, involved in the biosynthesis of branched-chain amino acids (BCAA). Catalyzes an alkyl-migration followed by a ketol-acid reduction of (S)-2-acetolactate (S2AL) to yield (R)-2,3-dihydroxy-isovalerate. In the isomerase reaction, S2AL is rearranged via a Mg-dependent methyl migration to produce 3-hydroxy-3-methyl-2-ketobutyrate (HMKB). In the reductase reaction, this 2-ketoacid undergoes a metal-dependent reduction by NADPH to yield (R)-2,3-dihydroxy-isovalerate. This chain is Ketol-acid reductoisomerase (NADP(+)), found in Anoxybacillus flavithermus (strain DSM 21510 / WK1).